We begin with the raw amino-acid sequence, 96 residues long: MNIKPLHDRVVVRQVEEQKESTGGILLPGSAQEKENLGEVVAVGPGKAADNGSIIPMTVKVGDKVMFGQYSGQEVKDDAGKPLKVMREDDIIAIVE.

It belongs to the GroES chaperonin family. As to quaternary structure, heptamer of 7 subunits arranged in a ring. Interacts with the chaperonin GroEL.

The protein resides in the cytoplasm. Together with the chaperonin GroEL, plays an essential role in assisting protein folding. The GroEL-GroES system forms a nano-cage that allows encapsulation of the non-native substrate proteins and provides a physical environment optimized to promote and accelerate protein folding. GroES binds to the apical surface of the GroEL ring, thereby capping the opening of the GroEL channel. In Hydrogenovibrio crunogenus (strain DSM 25203 / XCL-2) (Thiomicrospira crunogena), this protein is Co-chaperonin GroES.